The primary structure comprises 593 residues: Calnexin (593 aa).

The first 20 residues, 1–20 (MEGKWLLCMLLVLGTTIVQA), serve as a signal peptide directing secretion. At 21 to 482 (HEGHDDDMID…QMIEAAEERP (462 aa)) the chain is on the lumenal side. Positions 75 and 118 each coordinate Ca(2+). At Lys138 the chain carries N6-acetyllysine. A disulfide bridge links Cys161 with Cys195. An alpha-D-glucoside contacts are provided by Tyr165, Lys167, Tyr186, and Asp193. The tract at residues 261 to 346 (GNLLNDMTPP…AEKPEDWDED (86 aa)) is disordered. The segment at 277 to 410 (IEDPEDQKPE…RKIPNPDFFE (134 aa)) is p domain (Extended arm). Repeat copies occupy residues 279-290 (DPEDQKPEDWDE), 296-307 (DPDAVKPDDWNE), 315-326 (DEEATKPDGWLD), 334-345 (DPDAEKPEDWDE), and 349-359 (GEWEAPQIANP). 4 X approximate repeats regions lie at residues 279–345 (DPED…DWDE) and 349–406 (GEWE…IPNP). Residues 282 to 320 (DQKPEDWDERPKIPDPDAVKPDDWNEDAPAKIPDEEATK) show a composition bias toward basic and acidic residues. A compositionally biased stretch (acidic residues) spans 324–346 (WLDDEPEYVPDPDAEKPEDWDED). The interval 327-360 (DEPEYVPDPDAEKPEDWDEDMDGEWEAPQIANPK) is interaction with PPIB. Cys361 and Cys367 form a disulfide bridge. A run of 3 repeats spans residues 368–378 (GVWQRPMIDNP), 382–392 (GKWKPPMIDNP), and 396–406 (GIWKPRKIPNP). An alpha-D-glucoside is bound at residue Glu426. Residue Asp437 coordinates Ca(2+). The helical transmembrane segment at 483 to 503 (WLWVVYVLTVALPVFLVILFC) threads the bilayer. 2 S-palmitoyl cysteine lipidation sites follow: Cys503 and Cys504. At 504-593 (CSGKKQSSPV…SPRNRKPRRE (90 aa)) the chain is on the cytoplasmic side. The sufficient to mediate interaction with SGIP1 stretch occupies residues 504-593 (CSGKKQSSPV…SPRNRKPRRE (90 aa)). The tract at residues 511–593 (SPVEYKKTDA…SPRNRKPRRE (83 aa)) is disordered. Acidic residues predominate over residues 526 to 548 (KEEEEEKEEEKDKGDEEEEGEEK). The residue at position 555 (Ser555) is a Phosphoserine. The residue at position 563 (Thr563) is a Phosphothreonine. Position 565 is a phosphoserine; by MAPK3 (Ser565). Ser584 is modified (phosphoserine).

This sequence belongs to the calreticulin family. Interacts with MAPK3/ERK1. Interacts with KCNH2. Associates with ribosomes. Interacts with SGIP1; involved in negative regulation of endocytosis. The palmitoylated form interacts with the ribosome-translocon complex component SSR1, promoting efficient folding of glycoproteins. Interacts with SERPINA2P/SERPINA2 and with the S and Z variants of SERPINA1. Interacts with PPIB. Interacts with ZNRF4. Interacts with SMIM22. Interacts with TMX2. Interacts with TMEM35A/NACHO and CHRNA7. Interacts with reticulophagy regulators RETREG2 and RETREG3. Interacts with DNM1L; may form part of a larger protein complex at the ER-mitochondrial interface during mitochondrial fission. Interacts with ADAM7. In terms of processing, phosphorylated at Ser-565 by MAPK3/ERK1. Phosphorylation by MAPK3/ERK1 increases its association with ribosomes. Post-translationally, palmitoylation by DHHC6 leads to the preferential localization to the perinuclear rough ER. It mediates the association of calnexin with the ribosome-translocon complex (RTC) which is required for efficient folding of glycosylated proteins. Ubiquitinated, leading to proteasomal degradation. Probably ubiquitinated by ZNRF4.

The protein localises to the endoplasmic reticulum membrane. It is found in the mitochondrion membrane. It localises to the melanosome membrane. In terms of biological role, calcium-binding protein that interacts with newly synthesized monoglucosylated glycoproteins in the endoplasmic reticulum. It may act in assisting protein assembly and/or in the retention within the ER of unassembled protein subunits. It seems to play a major role in the quality control apparatus of the ER by the retention of incorrectly folded proteins. Associated with partial T-cell antigen receptor complexes that escape the ER of immature thymocytes, it may function as a signaling complex regulating thymocyte maturation. Additionally it may play a role in receptor-mediated endocytosis at the synapse. The chain is Calnexin (CANX) from Canis lupus familiaris (Dog).